The following is a 256-amino-acid chain: Ribonuclease HII (256 aa).

The RNase H type-2 domain occupies 72–256 (ALICGIDEVG…SFEPIKSMMK (185 aa)). A divalent metal cation contacts are provided by D78, E79, and D170.

Belongs to the RNase HII family. Mn(2+) serves as cofactor. It depends on Mg(2+) as a cofactor.

It localises to the cytoplasm. It catalyses the reaction Endonucleolytic cleavage to 5'-phosphomonoester.. Functionally, endonuclease that specifically degrades the RNA of RNA-DNA hybrids. The chain is Ribonuclease HII from Staphylococcus epidermidis (strain ATCC 12228 / FDA PCI 1200).